The sequence spans 628 residues: FAD-linked oxidoreductase hmp9 (628 aa).

The signal sequence occupies residues 1-29 (MFCIIRAQLLLLLHLLVLALLLVGTVCNA). Residues 34–53 (GHPSELEPLALKRGGSPRDD) form a disordered region. 2 N-linked (GlcNAc...) asparagine glycosylation sites follow: N80 and N133. In terms of domain architecture, FAD-binding PCMH-type spans 152 to 337 (LGQLPVYAID…LKTKIKAYPN (186 aa)). The N-linked (GlcNAc...) asparagine glycan is linked to N356.

Belongs to the oxygen-dependent FAD-linked oxidoreductase family.

It participates in secondary metabolite biosynthesis. Functionally, FAD-linked oxidoreductase; part of the gene cluster that mediates the biosynthesis of hypothemycin, a resorcylic acid lactone (RAL) that irreversibly inhibits a subset of protein kinases with a conserved cysteine in the ATP binding site such as human ERK2. The first step is performed by both PKSs hmp3 and hmp8 and leads to the production of 7',8'-dehydrozearalenol (DHZ). The highly reducing PKS hpm8 synthesizes the reduced hexaketide (7S,11S,2E,8E)-7,11-dihydroxy-dodeca-2,8-dienoate, which is transferred downstream to the non-reducing PKS hpm3. Hpm3 then extends the reduced hexaketide to a nonaketide, after which regioselective cyclization and macrolactonization affords DHZ. The next step is the conversion of DHZ into aigialomycin C and is performed by the O-methyltransferase hmp5, the FAD-binding monooxygenase hmp7, and the cytochrome P450 monooxygenase hmp1. The wide substrate tolerance of the hmp5 and hmp7 implies that the reactions from DHZ to aigialomycin C can occur in any order. The steps from aigialomycin C to hypothemycin are less well established. The FAD-linked oxidoreductase hmp9 presumably catalyzes oxidation of the C-6' hydroxyl to a ketone. The timing of this oxidation is important, since the resulting enone functional group is a Michael acceptor that can react spontaneously with glutathione, an abundant metabolite in fungal cells. The glutathione S-transferase hmp2 catalyzes cis-trans isomerization of the 7',8' double bond with equilibrium favoring the trans isomer. The hpm6-encoded transporter might preferentially pump hypothemycin out of the cell relative to the trans isomer aigialomycin A. The cis-to-trans isomerization may be coupled with C-4' hydroxylation, since all known hypothemycin analogs containing the enone functional group also have hydroxyl groups at both C-4' and C-5'. The sequence is that of FAD-linked oxidoreductase hmp9 from Hypomyces subiculosus (Nectria subiculosa).